A 66-amino-acid polypeptide reads, in one-letter code: Beta-defensin 13 (66 aa).

A signal peptide spans 1-22; that stretch reads MRIFSLIVAGLVLLIQLHPAKG. 3 cysteine pairs are disulfide-bonded: cysteine 30-cysteine 59, cysteine 37-cysteine 51, and cysteine 41-cysteine 60.

This sequence belongs to the beta-defensin family.

The protein localises to the secreted. Has antibacterial activity. The polypeptide is Beta-defensin 13 (Defb13) (Rattus norvegicus (Rat)).